The primary structure comprises 308 residues: Membrane protein insertase YidC 1 (308 aa).

The N-terminal stretch at 1–22 (MKSIKRFALSAMGVAMLLVLTG) is a signal peptide. Cys23 carries N-palmitoyl cysteine lipidation. Cys23 carries S-diacylglycerol cysteine lipidation. 5 consecutive transmembrane segments (helical) span residues 60–80 (FGVAIIIVTIIVRLIILPLGI), 135–155 (FGGVGCFPILLQMPFFSAIYF), 168–188 (YLGIPLGSPSMILVACAGVLY), 211–226 (MIYMSPLMIVVFSLFS), and 232–252 (LYWVVGGFMMILQQFIVNYIV). The disordered stretch occupies residues 263-308 (ELAKNPPKASAFSKPSGRKDVTPEQPTAITSKKKHKNRNAGKQRSR). Over residues 293–308 (SKKKHKNRNAGKQRSR) the composition is skewed to basic residues.

It belongs to the OXA1/ALB3/YidC family. Type 2 subfamily.

The protein resides in the cell membrane. In terms of biological role, required for the insertion and/or proper folding and/or complex formation of integral membrane proteins into the membrane. Involved in integration of membrane proteins that insert both dependently and independently of the Sec translocase complex, as well as at least some lipoproteins. This is Membrane protein insertase YidC 1 from Streptococcus pneumoniae serotype 4 (strain ATCC BAA-334 / TIGR4).